A 353-amino-acid chain; its full sequence is Melanin-concentrating hormone receptor 1 (353 aa).

At 1–45 (MDLQASLLSTGPNASNISDGQDNFTLAGPPPRTRSVSYINIIMPS) the chain is on the extracellular side. 3 N-linked (GlcNAc...) asparagine glycosylation sites follow: asparagine 13, asparagine 16, and asparagine 23. Residues 46 to 66 (VFGTICLLGIVGNSTVIFAVV) traverse the membrane as a helical segment. At 67–79 (KKSKLHWCSNVPD) the chain is on the cytoplasmic side. A helical transmembrane segment spans residues 80-100 (IFIINLSVVDLLFLLGMPFMI). The Extracellular segment spans residues 101 to 116 (HQLMGNGVWHFGETMC). A disulfide bond links cysteine 116 and cysteine 194. The helical transmembrane segment at 117–139 (TLITAMDANSQFTSTYILTAMAI) threads the bilayer. The Cytoplasmic segment spans residues 140–161 (DRYLATVHPISSTKFRKPSMAT). A helical transmembrane segment spans residues 162–182 (LVICLLWALSFISITPVWLYA). Residues 183–204 (RLIPFPGGAVGCGIRLPNPDTD) lie on the Extracellular side of the membrane. The helical transmembrane segment at 205 to 225 (LYWFTLYQFFLAFALPFVVIT) threads the bilayer. Over 226-256 (AAYVKILQRMTSSVAPASQRSIRLRTKRVTR) the chain is Cytoplasmic. The chain crosses the membrane as a helical span at residues 257–277 (TAIAICLVFFVCWAPYYVLQL). Residues 278–294 (TQLSISRPTLTFVYLYN) lie on the Extracellular side of the membrane. Residues 295–315 (AAISLGYANSCLNPFVYIVLC) form a helical membrane-spanning segment. Over 316-353 (ETFRKRLVLSVKPAAQGQLRTVSNAQTADEERTESKGT) the chain is Cytoplasmic.

It belongs to the G-protein coupled receptor 1 family. As to quaternary structure, interacts with NCDN. In terms of tissue distribution, expressed predominantly in the brain. Expression in brain is negatively regulated by leptin. Also found in the epithelium of the tongue and kidney.

The protein localises to the cell membrane. In terms of biological role, receptor for melanin-concentrating hormone, coupled to both G proteins that inhibit adenylyl cyclase and G proteins that activate phosphoinositide hydrolysis. The protein is Melanin-concentrating hormone receptor 1 of Mus musculus (Mouse).